A 65-amino-acid polypeptide reads, in one-letter code: Conopeptide Vt3.2 (65 aa).

The first 12 residues, 1–12 (LLFPLATLQLNA), serve as a signal peptide directing secretion. The propeptide occupies 13–48 (DQPVERNAENIQDLNPDKRFIFMPVPRRRGPYGSVH). Ser-64 carries the serine amide modification.

This sequence belongs to the conotoxin M superfamily. Homodimer; disulfide-linked. In terms of tissue distribution, expressed by the venom duct.

It is found in the secreted. This chain is Conopeptide Vt3.2, found in Conus planorbis (Planorbis cone).